The following is a 430-amino-acid chain: Chromatin assembly factor 1 p55 subunit (430 aa).

Residues Ser-11 and Ser-100 each carry the phosphoserine modification. WD repeat units lie at residues 126 to 159, 179 to 210, 229 to 260, 275 to 306, 319 to 350, and 376 to 407; these read NHEG…FDYT, GHQK…CLWD, GHTA…MIWD, AHTA…ALWD, SHKD…HVWD, and GHTA…QVWQ.

It belongs to the WD repeat RBAP46/RBAP48/MSI1 family. In terms of assembly, probably binds directly to helix 1 of the histone fold of histone H4, a region that is not accessible when H4 is in chromatin. Self associates. Associates with chromatin. Component of the CAF-1 complex, composed of Caf1-55, Caf1-105 and Caf1-180; within the CAF-1 complex, Caf1-180 interacts directly with both Caf1-55 and Caf1-105. Component of the NuRD complex, composed of at least Caf1-55, Mi-2, MTA1-like and HDAC1/Rpd3. Within the NuRD complex, Caf1-55 may interact directly with Mi-2, MTA1-like and HDAC1/Rpd3. The NuRD complex may also associate with the methyl-DNA binding protein MBD-like via Caf1-55 and Mi-2. Component of the NURF complex, composed of Caf1-55, E(bx), Nurf-38 and Iswi. Component of the polycomb repressive complex 2 (PRC2, also known as the Esc/E(Z) complex), composed of Caf1-55, esc, E(z), Su(z)12, and possibly pho. PRC2 associates with the accessory components Jarid2 and jing to form the PRC2 Jarid2-jing variant (PRC2.2). PRC2 may also associate with Pcl and HDAC1/Rpd3 during early embryogenesis. Interacts with Rbf and Rbf2. Component of the DREAM complex at least composed of Myb, Caf1-55, mip40, mip120, mip130, E2f2, Dp, Rbf, Rbf2, lin-52, HDAC1/Rpd3 and l(3)mbt.

It is found in the nucleus. In terms of biological role, core histone-binding subunit that may target chromatin assembly factors, chromatin remodeling factors and histone deacetylases to their histone substrates in a manner that is regulated by nucleosomal DNA. Component of several complexes which regulate chromatin metabolism. These include the chromatin assembly factor 1 (CAF-1) complex, which is required for chromatin assembly following DNA replication and DNA repair; the nucleosome remodeling and deacetylase complex (the NuRD complex), which promotes transcriptional repression by histone deacetylation and nucleosome remodeling; the nucleosome remodeling factor (NURF) complex, which catalyzes ATP-dependent nucleosome sliding and facilitates transcription of chromatin; and the polycomb group (PcG) repressor complex ESC-E(Z), which promotes repression of homeotic genes during development. Also required for transcriptional repression of E2F target genes by E2f2 and Rbf or Rbf2. This is Chromatin assembly factor 1 p55 subunit from Drosophila melanogaster (Fruit fly).